The following is a 158-amino-acid chain: 2-C-methyl-D-erythritol 2,4-cyclodiphosphate synthase (158 aa).

2 residues coordinate a divalent metal cation: aspartate 9 and histidine 11. 4-CDP-2-C-methyl-D-erythritol 2-phosphate is bound by residues 9-11 (DVH) and 35-36 (HS). Histidine 43 is a binding site for a divalent metal cation. 4-CDP-2-C-methyl-D-erythritol 2-phosphate is bound by residues 57–59 (DIG), 62–66 (FPDTD), 101–107 (AQKPKMA), 133–136 (TTTE), phenylalanine 140, and arginine 143.

Belongs to the IspF family. In terms of assembly, homotrimer. A divalent metal cation serves as cofactor.

It carries out the reaction 4-CDP-2-C-methyl-D-erythritol 2-phosphate = 2-C-methyl-D-erythritol 2,4-cyclic diphosphate + CMP. Its pathway is isoprenoid biosynthesis; isopentenyl diphosphate biosynthesis via DXP pathway; isopentenyl diphosphate from 1-deoxy-D-xylulose 5-phosphate: step 4/6. Its function is as follows. Involved in the biosynthesis of isopentenyl diphosphate (IPP) and dimethylallyl diphosphate (DMAPP), two major building blocks of isoprenoid compounds. Catalyzes the conversion of 4-diphosphocytidyl-2-C-methyl-D-erythritol 2-phosphate (CDP-ME2P) to 2-C-methyl-D-erythritol 2,4-cyclodiphosphate (ME-CPP) with a corresponding release of cytidine 5-monophosphate (CMP). In Bacillus licheniformis (strain ATCC 14580 / DSM 13 / JCM 2505 / CCUG 7422 / NBRC 12200 / NCIMB 9375 / NCTC 10341 / NRRL NRS-1264 / Gibson 46), this protein is 2-C-methyl-D-erythritol 2,4-cyclodiphosphate synthase.